The chain runs to 155 residues: 6,7-dimethyl-8-ribityllumazine synthase (155 aa).

Residues F24, 58–60 (AFE), and 82–84 (VII) each bind 5-amino-6-(D-ribitylamino)uracil. 87-88 (ST) contacts (2S)-2-hydroxy-3-oxobutyl phosphate. H90 functions as the Proton donor in the catalytic mechanism. F115 contributes to the 5-amino-6-(D-ribitylamino)uracil binding site. R129 lines the (2S)-2-hydroxy-3-oxobutyl phosphate pocket.

Belongs to the DMRL synthase family.

The catalysed reaction is (2S)-2-hydroxy-3-oxobutyl phosphate + 5-amino-6-(D-ribitylamino)uracil = 6,7-dimethyl-8-(1-D-ribityl)lumazine + phosphate + 2 H2O + H(+). It participates in cofactor biosynthesis; riboflavin biosynthesis; riboflavin from 2-hydroxy-3-oxobutyl phosphate and 5-amino-6-(D-ribitylamino)uracil: step 1/2. In terms of biological role, catalyzes the formation of 6,7-dimethyl-8-ribityllumazine by condensation of 5-amino-6-(D-ribitylamino)uracil with 3,4-dihydroxy-2-butanone 4-phosphate. This is the penultimate step in the biosynthesis of riboflavin. In Pelodictyon phaeoclathratiforme (strain DSM 5477 / BU-1), this protein is 6,7-dimethyl-8-ribityllumazine synthase.